We begin with the raw amino-acid sequence, 733 residues long: 2'-5'-oligoadenylate synthase 2 (733 aa).

Residue G2 is the site of N-myristoyl glycine attachment. 2 OAS domain regions span residues 47 to 365 and 373 to 713; these read VPSQ…CWDV and TPSH…WKVP. K408 carries the post-translational modification N6-acetyllysine. S427 provides a ligand contact to ATP. The Mg(2+) site is built by D439, D441, and D510. Residues R574 and K577 each contribute to the ATP site.

Belongs to the 2-5A synthase family. As to quaternary structure, homodimer. It depends on Mg(2+) as a cofactor. In terms of processing, myristoylation is not essential for its activity. Post-translationally, glycosylated. Glycosylation is essential for its activity.

It localises to the cytoplasm. Its subcellular location is the perinuclear region. It carries out the reaction 3 ATP = 5'-triphosphoadenylyl-(2'-&gt;5')-adenylyl-(2'-&gt;5')-adenosine + 2 diphosphate. Produced as a latent enzyme which is activated by double stranded RNA (dsRNA) generated during the course of viral infection. The dsRNA activator must be at least 15 nucleotides long, and no modification of the 2'-hydroxyl group is tolerated. ssRNA or dsDNA do not act as activators. Strongly inhibited by copper, iron and zinc ions. Partially inhibited by cobalt and nickel ions. Functionally, interferon-induced, dsRNA-activated antiviral enzyme which plays a critical role in cellular innate antiviral response. Activated by detection of double stranded RNA (dsRNA): polymerizes higher oligomers of 2'-5'-oligoadenylates (2-5A) from ATP which then bind to the inactive monomeric form of ribonuclease L (RNASEL) leading to its dimerization and subsequent activation. Activation of RNASEL leads to degradation of cellular as well as viral RNA, resulting in the inhibition of protein synthesis, thus terminating viral replication. Can mediate the antiviral effect via the classical RNASEL-dependent pathway or an alternative antiviral pathway independent of RNASEL. In addition, it may also play a role in other cellular processes such as apoptosis, cell growth, differentiation and gene regulation. May act as a negative regulator of lactation, stopping lactation in virally infected mammary gland lobules, thereby preventing transmission of viruses to neonates. Non-infected lobules would not be affected, allowing efficient pup feeding during infection. The protein is 2'-5'-oligoadenylate synthase 2 (Oas2) of Rattus norvegicus (Rat).